Reading from the N-terminus, the 417-residue chain is Gamma-glutamyl phosphate reductase (417 aa).

Belongs to the gamma-glutamyl phosphate reductase family.

The protein resides in the cytoplasm. The catalysed reaction is L-glutamate 5-semialdehyde + phosphate + NADP(+) = L-glutamyl 5-phosphate + NADPH + H(+). It functions in the pathway amino-acid biosynthesis; L-proline biosynthesis; L-glutamate 5-semialdehyde from L-glutamate: step 2/2. Its function is as follows. Catalyzes the NADPH-dependent reduction of L-glutamate 5-phosphate into L-glutamate 5-semialdehyde and phosphate. The product spontaneously undergoes cyclization to form 1-pyrroline-5-carboxylate. In Escherichia coli O6:K15:H31 (strain 536 / UPEC), this protein is Gamma-glutamyl phosphate reductase.